The primary structure comprises 308 residues: Glutaminase (308 aa).

Substrate-binding residues include Ser66, Asn117, Glu161, Asn168, Tyr192, Tyr244, and Val262.

It belongs to the glutaminase family. Homotetramer.

It catalyses the reaction L-glutamine + H2O = L-glutamate + NH4(+). The sequence is that of Glutaminase from Shigella dysenteriae serotype 1 (strain Sd197).